The following is a 310-amino-acid chain: Ribosomal RNA large subunit methyltransferase F (310 aa).

It belongs to the methyltransferase superfamily. METTL16/RlmF family.

The protein localises to the cytoplasm. It carries out the reaction adenosine(1618) in 23S rRNA + S-adenosyl-L-methionine = N(6)-methyladenosine(1618) in 23S rRNA + S-adenosyl-L-homocysteine + H(+). Specifically methylates the adenine in position 1618 of 23S rRNA. The protein is Ribosomal RNA large subunit methyltransferase F of Pseudoalteromonas translucida (strain TAC 125).